An 81-amino-acid chain; its full sequence is ATP synthase subunit c (81 aa).

The next 2 membrane-spanning stretches (helical) occupy residues 7–27 (AASV…PGIG) and 57–77 (LAFM…LLFA).

The protein belongs to the ATPase C chain family. As to quaternary structure, F-type ATPases have 2 components, F(1) - the catalytic core - and F(0) - the membrane proton channel. F(1) has five subunits: alpha(3), beta(3), gamma(1), delta(1), epsilon(1). F(0) has four main subunits: a(1), b(1), b'(1) and c(10-14). The alpha and beta chains form an alternating ring which encloses part of the gamma chain. F(1) is attached to F(0) by a central stalk formed by the gamma and epsilon chains, while a peripheral stalk is formed by the delta, b and b' chains.

The protein resides in the cellular thylakoid membrane. In terms of biological role, f(1)F(0) ATP synthase produces ATP from ADP in the presence of a proton or sodium gradient. F-type ATPases consist of two structural domains, F(1) containing the extramembraneous catalytic core and F(0) containing the membrane proton channel, linked together by a central stalk and a peripheral stalk. During catalysis, ATP synthesis in the catalytic domain of F(1) is coupled via a rotary mechanism of the central stalk subunits to proton translocation. Key component of the F(0) channel; it plays a direct role in translocation across the membrane. A homomeric c-ring of between 10-14 subunits forms the central stalk rotor element with the F(1) delta and epsilon subunits. This chain is ATP synthase subunit c, found in Synechococcus sp. (strain CC9311).